Consider the following 1057-residue polypeptide: Histone deacetylase complex subunit SAP130 (1057 aa).

Disordered regions lie at residues 1–68 (MSSQ…EEKQ), 289–314 (TLSRPTLSIQQHPPSAAISIQRPAQP), 556–594 (GIQPAPIGTQGLHPAAPIGTQGLQPAPISAQQPQADTKT), 624–692 (QTHS…KPKP), and 827–880 (NLSM…VKAE). Positions 41-54 (ESVRDPEVAPRDQH) are enriched in basic and acidic residues. Residues 289–301 (TLSRPTLSIQQHP) are compositionally biased toward polar residues. Composition is skewed to low complexity over residues 579-590 (QPAPISAQQPQA) and 624-642 (QTHSQSASAPAQGSSPRPS). Residues 671 to 682 (RVENTMRSTSGS) are compositionally biased toward polar residues.

It belongs to the SAP130 family. In terms of assembly, component of a mSin3A corepressor complex that contains SIN3A, SAP130, SUDS3/SAP45, ARID4B/SAP180, HDAC1 and HDAC2.

Its subcellular location is the nucleus. Its function is as follows. Acts as a transcriptional repressor. May function in the assembly and/or enzymatic activity of the mSin3A corepressor complex or in mediating interactions between the complex and other regulatory complexes. The polypeptide is Histone deacetylase complex subunit SAP130 (SAP130) (Gallus gallus (Chicken)).